A 457-amino-acid chain; its full sequence is Argininosuccinate lyase (457 aa).

This sequence belongs to the lyase 1 family. Argininosuccinate lyase subfamily.

Its subcellular location is the cytoplasm. It carries out the reaction 2-(N(omega)-L-arginino)succinate = fumarate + L-arginine. It functions in the pathway amino-acid biosynthesis; L-arginine biosynthesis; L-arginine from L-ornithine and carbamoyl phosphate: step 3/3. This chain is Argininosuccinate lyase, found in Shewanella sediminis (strain HAW-EB3).